Consider the following 656-residue polypeptide: Vacuolar amino acid transporter 3 (656 aa).

Residues 1–109 (MSNSQSIKIK…VPSTSEDPDV (109 aa)) are disordered. The span at 15–28 (NENFASGSYSSRRS) shows a compositional bias: polar residues. Ser37 and Ser53 each carry phosphoserine. Over residues 50–71 (ISPSESNLPNNVAENTTDTPVN) the composition is skewed to polar residues. The segment covering 75–97 (IRDENHNSRKGKDVTLNSDEAHS) has biased composition (basic and acidic residues). A Phosphoserine modification is found at Ser172. 11 helical membrane-spanning segments follow: residues 280–300 (AVLL…PKAF), 307–327 (FSSA…LLLI), 351–371 (FAIL…YISF), 389–409 (EYHL…LSLV), 419–439 (ALIA…WDVI), 457–477 (FSLF…ILPI), 494–514 (VMAA…AAFG), 537–557 (LYAI…IAII), 578–598 (YLRV…SSRL), 601–621 (FVSM…PPML), and 636–656 (DIFM…MTFF).

This sequence belongs to the amino acid/polyamine transporter 2 family.

The protein localises to the endoplasmic reticulum membrane. The protein resides in the vacuole membrane. Its function is as follows. Involved in amino acid efflux from the vacuole to the cytoplasm. Capable of transporting large neutral amino acids including tyrosine, glutamine, asparagine, isoleucine and leucine. Required for spore formation. The polypeptide is Vacuolar amino acid transporter 3 (avt3) (Schizosaccharomyces pombe (strain 972 / ATCC 24843) (Fission yeast)).